Consider the following 424-residue polypeptide: MAKNIQAIRGMNDYLPADTALWQPIEAALKQVLASYGYSEIRLPIVEQTPLFKRAIGEVTDVVEKEMYTFEDRNGDSLTLRPEGTAGCVRAGIEHGLLYNQEQRLWYIGPMFRHERPQKGRYRQFHQLGAEVFGLAGPDIDAEIIMMTARWWKVLGIADHVTLELNSIGSLEARAAYRDALVAYLEQYKDQLDEDCLRRMYSNPLRVLDSKNPQVQALLNAAPRLSEYLDADSRAHFDGLCRLLDDAGIVYTVNERLVRGLDYYNRTVFEWVTTSLGAQGTVCAGGRYDGLVAQLGGHATSAVGFAMGLERLVLLVQAVNPAFLPQRAVDVYLIAAGEGTQSAAMRLAEQLRDALPTLRLMTNYGGGNFKKQFARADKWGARIALVLGESEVQSGQVNVKCLASGEQQTVAQDQAATLLATLLG.

It belongs to the class-II aminoacyl-tRNA synthetase family. In terms of assembly, homodimer.

The protein localises to the cytoplasm. It carries out the reaction tRNA(His) + L-histidine + ATP = L-histidyl-tRNA(His) + AMP + diphosphate + H(+). In Edwardsiella ictaluri (strain 93-146), this protein is Histidine--tRNA ligase.